A 315-amino-acid polypeptide reads, in one-letter code: Manganese-dependent 2,3-dihydroxybiphenyl 1,2-dioxygenase (315 aa).

VOC domains are found at residues 7 to 121 (KFGH…IYYD) and 150 to 273 (RIDH…LFSG). Residues His-153, His-216, and Glu-269 each contribute to the Mn(2+) site.

The protein belongs to the extradiol ring-cleavage dioxygenase family. As to quaternary structure, homotetramer. The cofactor is Mn(2+).

It catalyses the reaction biphenyl-2,3-diol + O2 = 2-hydroxy-6-oxo-6-phenylhexa-2,4-dienoate + H(+). Its pathway is xenobiotic degradation; biphenyl degradation; 2-hydroxy-2,4-pentadienoate and benzoate from biphenyl: step 3/4. Functionally, catalyzes the meta-cleavage of the hydroxylated biphenyl ring. The enzyme can oxidize a wide range of substrates, and the substrate preference order is 2,3-dihydroxybiphenyl &gt; 3-methylcatechol &gt; catechol &gt; 4-methylcatechol &gt; 4-chlorocatechol. The sequence is that of Manganese-dependent 2,3-dihydroxybiphenyl 1,2-dioxygenase (bphC) from Geobacillus genomosp. 3.